The primary structure comprises 160 residues: Nucleotide-binding protein Ping_2261 (160 aa).

It belongs to the YajQ family.

In terms of biological role, nucleotide-binding protein. The sequence is that of Nucleotide-binding protein Ping_2261 from Psychromonas ingrahamii (strain DSM 17664 / CCUG 51855 / 37).